Here is a 79-residue protein sequence, read N- to C-terminus: Apolipoprotein C-II (79 aa).

A signal peptide spans 1–21; sequence MDLKVVAVSFLLLVLCSEAAG. Residues 45–52 form a lipid binding region; it reads GVEKLRDI. The segment at 56–79 is lipoprotein lipase cofactor; it reads SVDAVGTYTSILTDQLYHWWCGEQ.

The protein belongs to the apolipoprotein C2 family. Post-translationally, proapolipoprotein C-II is synthesized as a sialic acid containing glycoprotein which is subsequently desialylated prior to its proteolytic processing. In terms of processing, proapolipoprotein C-II, the major form found in plasma undergoes proteolytic cleavage of its N-terminal hexapeptide to generate apolipoprotein C-II, which occurs as the minor form in plasma.

The protein resides in the secreted. In terms of biological role, component of chylomicrons, very low-density lipoproteins (VLDL), low-density lipoproteins (LDL), and high-density lipoproteins (HDL) in plasma. Plays an important role in lipoprotein metabolism as an activator of lipoprotein lipase. Both proapolipoprotein C-II and apolipoprotein C-II can activate lipoprotein lipase. The chain is Apolipoprotein C-II (APOC2) from Alligator mississippiensis (American alligator).